The chain runs to 438 residues: 3-phosphoshikimate 1-carboxyvinyltransferase (438 aa).

A phosphoenolpyruvate-binding site is contributed by lysine 21. 3-phosphoshikimate is bound by residues serine 22 and arginine 26. The phosphoenolpyruvate stretch occupies residues 93–96 (NSGT). Phosphoenolpyruvate-binding residues include glycine 95, threonine 96, and arginine 123. 3-phosphoshikimate is bound by residues serine 167, alanine 168, glutamine 169, aspartate 315, and lysine 342. Glutamine 169 is a phosphoenolpyruvate binding site. Aspartate 315 functions as the Proton acceptor in the catalytic mechanism. Positions 346 and 387 each coordinate phosphoenolpyruvate.

This sequence belongs to the EPSP synthase family. Homodimer or homotetramer.

The protein resides in the cytoplasm. The enzyme catalyses 3-phosphoshikimate + phosphoenolpyruvate = 5-O-(1-carboxyvinyl)-3-phosphoshikimate + phosphate. It functions in the pathway metabolic intermediate biosynthesis; chorismate biosynthesis; chorismate from D-erythrose 4-phosphate and phosphoenolpyruvate: step 6/7. Its function is as follows. Catalyzes the transfer of the enolpyruvyl moiety of phosphoenolpyruvate (PEP) to the 5-hydroxyl of shikimate-3-phosphate (S3P) to produce enolpyruvyl shikimate-3-phosphate and inorganic phosphate. This chain is 3-phosphoshikimate 1-carboxyvinyltransferase, found in Coxiella burnetii (strain RSA 493 / Nine Mile phase I).